The primary structure comprises 327 residues: Secondary metabolism regulator LAE1 (327 aa).

Belongs to the methyltransferase superfamily. LaeA methyltransferase family.

It localises to the nucleus. The enzyme catalyses L-methionyl-[protein] + S-adenosyl-L-methionine = S-methyl-L-methionyl-[protein] + S-adenosyl-L-homocysteine. Secondary metabolism regulator that controls the expression of the tenuazonic acid biosynthesis cluster. Methyltransferase that performs automethylation. No other methyl-accepting substrate has been identified yet. The polypeptide is Secondary metabolism regulator LAE1 (Pyricularia oryzae (strain 70-15 / ATCC MYA-4617 / FGSC 8958) (Rice blast fungus)).